A 150-amino-acid polypeptide reads, in one-letter code: Large ribosomal subunit protein bL9 (150 aa).

The protein belongs to the bacterial ribosomal protein bL9 family.

Its function is as follows. Binds to the 23S rRNA. The polypeptide is Large ribosomal subunit protein bL9 (Burkholderia ambifaria (strain MC40-6)).